The chain runs to 115 residues: Large ribosomal subunit protein bL19 (115 aa).

Belongs to the bacterial ribosomal protein bL19 family.

This protein is located at the 30S-50S ribosomal subunit interface and may play a role in the structure and function of the aminoacyl-tRNA binding site. The sequence is that of Large ribosomal subunit protein bL19 from Desulforamulus reducens (strain ATCC BAA-1160 / DSM 100696 / MI-1) (Desulfotomaculum reducens).